The primary structure comprises 261 residues: Pantothenate synthetase (261 aa).

29-36 contributes to the ATP binding site; that stretch reads MGALHNGH. His-36 functions as the Proton donor in the catalytic mechanism. Gln-60 is a (R)-pantoate binding site. Residue Gln-60 participates in beta-alanine binding. 147–150 serves as a coordination point for ATP; the sequence is GEKD. Gln-153 is a (R)-pantoate binding site. ATP is bound at residue 184–187; sequence LSSR.

It belongs to the pantothenate synthetase family. In terms of assembly, homodimer.

The protein localises to the cytoplasm. The catalysed reaction is (R)-pantoate + beta-alanine + ATP = (R)-pantothenate + AMP + diphosphate + H(+). It functions in the pathway cofactor biosynthesis; (R)-pantothenate biosynthesis; (R)-pantothenate from (R)-pantoate and beta-alanine: step 1/1. Functionally, catalyzes the condensation of pantoate with beta-alanine in an ATP-dependent reaction via a pantoyl-adenylate intermediate. This chain is Pantothenate synthetase, found in Francisella tularensis subsp. novicida (strain U112).